A 58-amino-acid chain; its full sequence is Temporin-1Th (58 aa).

The first 22 residues, 1 to 22 (MFTLKKSLLLLFFLGTINLSLC), serve as a signal peptide directing secretion. Positions 23–46 (EEERNAEEERRDEPDERDVQVEKR) are excised as a propeptide. Positions 25 to 46 (ERNAEEERRDEPDERDVQVEKR) are disordered. L56 carries the leucine amide modification.

Expressed by the skin glands.

Its subcellular location is the secreted. In terms of biological role, antimicrobial peptide that renders both the outer and inner membrane of bacteria permeable to hydrophobic substances of low molecular mass. The polypeptide is Temporin-1Th (Rana temporaria (European common frog)).